Consider the following 353-residue polypeptide: Photosystem II D2 protein (353 aa).

Residue threonine 2 is modified to N-acetylthreonine. Position 2 is a phosphothreonine (threonine 2). A helical membrane pass occupies residues 41 to 61 (CAYFALGGWFTGTTFVTSWYT). Histidine 118 is a binding site for chlorophyll a. The chain crosses the membrane as a helical span at residues 125–141 (GFMLRQFELARSVQLRP). 2 residues coordinate pheophytin a: glutamine 130 and asparagine 143. The chain crosses the membrane as a helical span at residues 153–166 (VFVSVFLIYPLGQS). Position 198 (histidine 198) interacts with chlorophyll a. Residues 208 to 228 (AALLCAIHGATVENTLFEDGD) traverse the membrane as a helical segment. A plastoquinone-binding residues include histidine 215 and phenylalanine 262. Histidine 215 contributes to the Fe cation binding site. Residue histidine 269 coordinates Fe cation. Residues 279–295 (GLWMSALGVVGLALNLR) traverse the membrane as a helical segment.

It belongs to the reaction center PufL/M/PsbA/D family. PSII is composed of 1 copy each of membrane proteins PsbA, PsbB, PsbC, PsbD, PsbE, PsbF, PsbH, PsbI, PsbJ, PsbK, PsbL, PsbM, PsbT, PsbX, PsbY, PsbZ, Psb30/Ycf12, at least 3 peripheral proteins of the oxygen-evolving complex and a large number of cofactors. It forms dimeric complexes. Requires The D1/D2 heterodimer binds P680, chlorophylls that are the primary electron donor of PSII, and subsequent electron acceptors. It shares a non-heme iron and each subunit binds pheophytin, quinone, additional chlorophylls, carotenoids and lipids. There is also a Cl(-1) ion associated with D1 and D2, which is required for oxygen evolution. The PSII complex binds additional chlorophylls, carotenoids and specific lipids. as cofactor.

It localises to the plastid. It is found in the chloroplast thylakoid membrane. The catalysed reaction is 2 a plastoquinone + 4 hnu + 2 H2O = 2 a plastoquinol + O2. Photosystem II (PSII) is a light-driven water:plastoquinone oxidoreductase that uses light energy to abstract electrons from H(2)O, generating O(2) and a proton gradient subsequently used for ATP formation. It consists of a core antenna complex that captures photons, and an electron transfer chain that converts photonic excitation into a charge separation. The D1/D2 (PsbA/PsbD) reaction center heterodimer binds P680, the primary electron donor of PSII as well as several subsequent electron acceptors. D2 is needed for assembly of a stable PSII complex. The protein is Photosystem II D2 protein of Aethionema grandiflorum (Persian stone-cress).